An 84-amino-acid chain; its full sequence is Exodeoxyribonuclease 7 small subunit (84 aa).

It belongs to the XseB family. Heterooligomer composed of large and small subunits.

It is found in the cytoplasm. The catalysed reaction is Exonucleolytic cleavage in either 5'- to 3'- or 3'- to 5'-direction to yield nucleoside 5'-phosphates.. Its function is as follows. Bidirectionally degrades single-stranded DNA into large acid-insoluble oligonucleotides, which are then degraded further into small acid-soluble oligonucleotides. The polypeptide is Exodeoxyribonuclease 7 small subunit (Azoarcus sp. (strain BH72)).